We begin with the raw amino-acid sequence, 193 residues long: Glycerol-3-phosphate acyltransferase (193 aa).

The next 4 membrane-spanning stretches (helical) occupy residues 2 to 22 (LIAL…GLIV), 76 to 96 (VPIH…FPVF), 112 to 132 (LLFY…VFLF), and 152 to 172 (CLFV…AFVI).

Belongs to the PlsY family. In terms of assembly, probably interacts with PlsX.

Its subcellular location is the cell membrane. The enzyme catalyses an acyl phosphate + sn-glycerol 3-phosphate = a 1-acyl-sn-glycero-3-phosphate + phosphate. The protein operates within lipid metabolism; phospholipid metabolism. Functionally, catalyzes the transfer of an acyl group from acyl-phosphate (acyl-PO(4)) to glycerol-3-phosphate (G3P) to form lysophosphatidic acid (LPA). This enzyme utilizes acyl-phosphate as fatty acyl donor, but not acyl-CoA or acyl-ACP. The sequence is that of Glycerol-3-phosphate acyltransferase from Bacillus velezensis (strain DSM 23117 / BGSC 10A6 / LMG 26770 / FZB42) (Bacillus amyloliquefaciens subsp. plantarum).